The primary structure comprises 601 residues: Glutamyl-tRNA(Gln) amidotransferase subunit B, mitochondrial (601 aa).

A mitochondrion-targeting transit peptide spans 1–52 (MLQQWLRQSPRAARVLRGSCCRGPQSGSLRHSPLPTAPHRCIRSLQTSATES).

Belongs to the GatB/GatE family. GatB subfamily. Subunit of the heterotrimeric GatCAB amidotransferase (AdT) complex, composed of A, B and C subunits.

It is found in the mitochondrion. The catalysed reaction is L-glutamyl-tRNA(Gln) + L-glutamine + ATP + H2O = L-glutaminyl-tRNA(Gln) + L-glutamate + ADP + phosphate + H(+). Allows the formation of correctly charged Gln-tRNA(Gln) through the transamidation of misacylated Glu-tRNA(Gln) in the mitochondria. The reaction takes place in the presence of glutamine and ATP through an activated gamma-phospho-Glu-tRNA(Gln). The protein is Glutamyl-tRNA(Gln) amidotransferase subunit B, mitochondrial of Aspergillus fumigatus (strain ATCC MYA-4609 / CBS 101355 / FGSC A1100 / Af293) (Neosartorya fumigata).